The chain runs to 70 residues: MVGICSTAVSHSSLTAVDVLDKTIPMFNKGHFTRLLNPCLINVANEGSSSTTIEFSSRGCCMMNDGMLFD.

This is an uncharacterized protein from Vaccinia virus (strain Copenhagen) (VACV).